The primary structure comprises 688 residues: UvrABC system protein C (688 aa).

In terms of domain architecture, GIY-YIG spans 11 to 90 (LTPGVYLYKD…IKKHRPRYNI (80 aa)). The 36-residue stretch at 200 to 235 (GELVDALRTEMEAASQGLDFERAAVLRDRIRALERT) folds into the UVR domain.

Belongs to the UvrC family. In terms of assembly, interacts with UvrB in an incision complex.

The protein resides in the cytoplasm. Its function is as follows. The UvrABC repair system catalyzes the recognition and processing of DNA lesions. UvrC both incises the 5' and 3' sides of the lesion. The N-terminal half is responsible for the 3' incision and the C-terminal half is responsible for the 5' incision. The polypeptide is UvrABC system protein C (Nitratidesulfovibrio vulgaris (strain ATCC 29579 / DSM 644 / CCUG 34227 / NCIMB 8303 / VKM B-1760 / Hildenborough) (Desulfovibrio vulgaris)).